Consider the following 199-residue polypeptide: Recombination protein RecR (199 aa).

The C4-type zinc finger occupies 58–73 (CRICYNITDTEVCNIC). Positions 81-176 (SLICVVSHPM…KVTRIAHGVP (96 aa)) constitute a Toprim domain.

It belongs to the RecR family.

Functionally, may play a role in DNA repair. It seems to be involved in an RecBC-independent recombinational process of DNA repair. It may act with RecF and RecO. In Thermoanaerobacter sp. (strain X514), this protein is Recombination protein RecR.